Consider the following 53-residue polypeptide: ATSYTLNEVVPLKEFVPEWVRIGFSATTGAEFAAHEVLSWSFHSELAGTSSSN.

Belongs to the leguminous lectin family. Tetramer of two alpha and two beta chains.

The protein is Lectin alpha chain of Lathyrus clymenum (Spanish vetchling).